Consider the following 324-residue polypeptide: 6-methylsalicylic acid decarboxylase (324 aa).

Positions 7, 9, 157, and 274 each coordinate Zn(2+).

The protein belongs to the metallo-dependent hydrolases superfamily. ACMSD family. As to quaternary structure, monomer.

It is found in the cytoplasm. Its subcellular location is the cytosol. It carries out the reaction 6-methylsalicylate + H(+) = 3-methylphenol + CO2. It functions in the pathway mycotoxin biosynthesis; patulin biosynthesis. Functionally, 6-methylsalicylic acid decarboxylase; part of the gene cluster that mediates the biosynthesis of patulin, an acetate-derived tetraketide mycotoxin produced by several fungal species that shows antimicrobial properties against several bacteria. PatG catalyzes the decarboxylation of 6-methylsalicylic acid to yield m-cresol. The pathway begins with the synthesis of 6-methylsalicylic acid by the polyketide synthase (PKS) patK via condensation of acetate and malonate units. The 6-methylsalicylic acid decarboxylase patG then catalyzes the decarboxylation of 6-methylsalicylic acid to yield m-cresol (also known as 3-methylphenol). These first reactions occur in the cytosol. The intermediate m-cresol is then transported into the endoplasmic reticulum where the cytochrome P450 monooxygenase patH converts it to m-hydroxybenzyl alcohol, which is further converted to gentisyl alcohol by the cytochrome P450 monooxygenase patI. The oxidoreductases patJ and patO further convert gentisyl alcohol to isoepoxydon in the vacuole. PatN catalyzes then the transformation of isoepoxydon into phyllostine. The cluster protein patF is responsible for the conversion from phyllostine to neopatulin whereas the alcohol dehydrogenase patD converts neopatulin to E-ascladiol. The steps between isoepoxydon and E-ascladiol occur in the cytosol, and E-ascladiol is probably secreted to the extracellular space by one of the cluster-specific transporters patC or patM. Finally, the secreted patulin synthase patE catalyzes the conversion of E-ascladiol to patulin. This Penicillium expansum (Blue mold rot fungus) protein is 6-methylsalicylic acid decarboxylase.